Consider the following 857-residue polypeptide: Inactive rhomboid protein 1 (857 aa).

Topologically, residues 1–413 (MAELRRDSTS…HRPFFTYWIT (413 aa)) are cytoplasmic. Positions 283–307 (FESPSDSTMKDVDSKQLDESELTGS) are disordered. Positions 290–300 (TMKDVDSKQLD) are enriched in basic and acidic residues. A helical membrane pass occupies residues 414–434 (FVHILITILAVCIYGIAPVGF). Topologically, residues 435–661 (SQHETVDSVL…PDQFYRLWLS (227 aa)) are lumenal. Residue asparagine 585 is glycosylated (N-linked (GlcNAc...) asparagine). A helical transmembrane segment spans residues 662–682 (LFLHAGILHCLVSVCFQMTIL). The Cytoplasmic portion of the chain corresponds to 683-693 (RDLEKLAGWLR). Residues 694-714 (ISIIYILSGITGNLASAIFLP) traverse the membrane as a helical segment. At 715-716 (YR) the chain is on the lumenal side. A helical transmembrane segment spans residues 717 to 737 (AEVGPAGSQFGILACLFVELI). Residues 738 to 748 (QSWQILAQPWR) are Cytoplasmic-facing. A helical transmembrane segment spans residues 749-769 (AFTKLLCVVLFLFAFGLLPWI). Residues 770 to 774 (DNFAH) lie on the Lumenal side of the membrane. A helical transmembrane segment spans residues 775–795 (ISGFISGFFLSFAFLPYISFG). Over 796 to 805 (RLDMYRKRCQ) the chain is Cytoplasmic. The chain crosses the membrane as a helical span at residues 806-826 (IIIFLVVFLGLFAGLVVLFYV). Topologically, residues 827 to 857 (HPIKCEWCELLTCIPFTDKFCEKYDLNAHLH) are lumenal.

Belongs to the peptidase S54 family.

Its subcellular location is the endoplasmic reticulum membrane. It localises to the golgi apparatus membrane. Its function is as follows. Regulates ADAM17 protease, a sheddase of the epidermal growth factor (EGF) receptor ligands and TNF, thereby plays a role in sleep, cell survival, proliferation, migration and inflammation. Does not exhibit any protease activity on its own. This chain is Inactive rhomboid protein 1 (rhbdf1), found in Danio rerio (Zebrafish).